We begin with the raw amino-acid sequence, 176 residues long: Probable chemoreceptor glutamine deamidase CheD (176 aa).

Belongs to the CheD family.

It catalyses the reaction L-glutaminyl-[protein] + H2O = L-glutamyl-[protein] + NH4(+). Functionally, probably deamidates glutamine residues to glutamate on methyl-accepting chemotaxis receptors (MCPs), playing an important role in chemotaxis. The polypeptide is Probable chemoreceptor glutamine deamidase CheD (Rhodospirillum rubrum (strain ATCC 11170 / ATH 1.1.1 / DSM 467 / LMG 4362 / NCIMB 8255 / S1)).